A 535-amino-acid chain; its full sequence is Growth-regulating factor 2 (535 aa).

The QLQ domain occupies 164 to 199 (PFTLTQWAELEQQALIYKYITANVPVPSSLLISIKK). One can recognise a WRC domain in the interval 227–271 (DPEPGRCRRTDGKKWRCSRDAVPDQKYCERHINRGRHRSRKPVEV). 2 short sequence motifs (bipartite nuclear localization signal) span residues 232 to 242 (RCRRTDGKKWR) and 260 to 267 (RGRHRSRK). Disordered regions lie at residues 260–308 (RGRH…ASSN), 417–437 (PIAS…EKTT), and 514–535 (SSVS…HYTT). Residues 272-291 (QSGQNQTAAAASKAVTTPQQ) show a composition bias toward polar residues. Low complexity predominate over residues 299–308 (NRSNARASSN). Positions 426 to 437 (THNNNNAQEKTT) are enriched in polar residues.

It belongs to the GRF family. As to quaternary structure, interacts with GIF1. As to expression, strongly expressed in actively growing and developing tissues, such as roots, upper stems, and shoot tips containing the shoot apical meristem (SAM) and flower buds. Detected in young leaf primordium. Also expressed in mature flowers, but weakly expressed in mature stems and leaves.

It localises to the nucleus. Its function is as follows. Transcription activator that plays a role in the regulation of cell expansion in leaf and cotyledons tissues. Component of a network formed by miR396, the GRFs and their interacting factors (GIFs) acting in the regulation of meristem function, at least partially through the control of cell proliferation. This Arabidopsis thaliana (Mouse-ear cress) protein is Growth-regulating factor 2 (GRF2).